Consider the following 338-residue polypeptide: Fructose-1,6-bisphosphatase 1 (338 aa).

Ala-2 carries the N-acetylalanine modification. AMP contacts are provided by residues 18–22 (VMEQG) and 28–32 (TGELT). Mg(2+) is bound by residues Asp-69 and Glu-98. Residue 113–114 (KY) coordinates AMP. Residues Asp-119, Leu-121, and Asp-122 each coordinate Mg(2+). 122–125 (DGSS) lines the substrate pocket. AMP is bound at residue Arg-141. An N6-succinyllysine modification is found at Lys-151. Substrate-binding positions include 213-216 (NEGY), 244-249 (RYVGSM), Tyr-265, and 275-277 (KLR). A phosphotyrosine mark is found at Tyr-216, Tyr-245, and Tyr-265. Glu-281 lines the Mg(2+) pocket.

It belongs to the FBPase class 1 family. Homotetramer. Mg(2+) is required as a cofactor. In terms of tissue distribution, detected in pancreatic beta-cell lines MIN6 and beta-TC and in liver (at protein level). Preferentially expressed in liver, with lower levels detected in pancreatic islets and intestine, and very low levels in blood, muscle, brain and spleen.

The catalysed reaction is beta-D-fructose 1,6-bisphosphate + H2O = beta-D-fructose 6-phosphate + phosphate. It participates in carbohydrate biosynthesis; gluconeogenesis. Its activity is regulated as follows. Subject to complex allosteric regulation. The enzyme can assume an active R-state, or an inactive T-state. Intermediate conformations may exist. AMP acts as an allosteric inhibitor. AMP binding affects the turnover of bound substrate and not the affinity for substrate. Fructose 2,6-bisphosphate acts as a competitive inhibitor. Fructose 2,6-bisphosphate and AMP have synergistic effects. Functionally, catalyzes the hydrolysis of fructose 1,6-bisphosphate to fructose 6-phosphate in the presence of divalent cations, acting as a rate-limiting enzyme in gluconeogenesis. Plays a role in regulating glucose sensing and insulin secretion of pancreatic beta-cells. Appears to modulate glycerol gluconeogenesis in liver. Important regulator of appetite and adiposity; increased expression of the protein in liver after nutrient excess increases circulating satiety hormones and reduces appetite-stimulating neuropeptides and thus seems to provide a feedback mechanism to limit weight gain. This is Fructose-1,6-bisphosphatase 1 (Fbp1) from Mus musculus (Mouse).